We begin with the raw amino-acid sequence, 988 residues long: Voltage-gated delayed rectifier potassium channel KCNH5 (988 aa).

Topologically, residues 1–217 (MPGGKRGLVA…LHYCAFKTTW (217 aa)) are cytoplasmic. A PAS domain is found at 14-86 (TFLENIVRRS…TIEKVRQTFD (73 aa)). The 53-residue stretch at 91–143 (NCFEVLLYKKNRTPVWFYMQIAPIRNEHEKVVLFLCTFKDITLFKQPIEDDST) folds into the PAC domain. The helical transmembrane segment at 218–238 (DWVILILTFYTAIMVPYNVSF) threads the bilayer. At 239–243 (KTKQN) the chain is on the extracellular side. The helical transmembrane segment at 244–264 (NIAWLVLDSVVDVIFLVDIVL) threads the bilayer. Residues 265 to 291 (NFHTTFVGPGGEVISDPKLIRMNYLKT) are Cytoplasmic-facing. Residues 292 to 312 (WFVIDLLSCLPYDIINAFENV) traverse the membrane as a helical segment. The Extracellular segment spans residues 313-319 (DEGISSL). Residues 320–340 (FSSLKVVRLLRLGRVARKLDH) form a helical; Voltage-sensor membrane-spanning segment. Residues 341–346 (YLEYGA) lie on the Cytoplasmic side of the membrane. Residues 347 to 367 (AVLVLLVCVFGLVAHWLACIW) form a helical membrane-spanning segment. Over 368–419 (YSIGDYEVIDEVTNTIQIDSWLYQLALSIGTPYRYNTSAGIWEGGPSKDSLY) the chain is Extracellular. N-linked (GlcNAc...) asparagine glycosylation occurs at N403. An intramembrane region (pore-forming) is located at residues 420 to 440 (VSSLYFTMTSLTTIGFGNIAP). The short motif at 432-437 (TIGFGN) is the Selectivity filter element. The Extracellular portion of the chain corresponds to 441–446 (TTDVEK). The helical transmembrane segment at 447–467 (MFSVAMMMVGSLLYATIFGNV) threads the bilayer. At 468–988 (TTIFQQMYAN…PESDKDEINF (521 aa)) the chain is on the cytoplasmic side. 550–667 (AFRLASDGCL…NSFSRNLTLT (118 aa)) contributes to the a nucleoside 3',5'-cyclic phosphate binding site. The segment at 704–715 (HPVRKLFQKFKQ) is calmodulin-binding. A disordered region spans residues 718-742 (ELRNQGSAQSDPERSQLQVESRPLQ). Residues 721 to 742 (NQGSAQSDPERSQLQVESRPLQ) show a composition bias toward polar residues. A Glycyl lysine isopeptide (Lys-Gly) (interchain with G-Cter in ubiquitin) cross-link involves residue K785. 2 disordered regions span residues 839–897 (LLSE…AKHP) and 946–965 (SVPQTSSPKPQIPLQVPPQI). The segment covering 871–885 (SDLRLDKAGEARSPL) has biased composition (basic and acidic residues). S883 bears the Phosphoserine mark. The CAD (involved in subunit assembly) stretch occupies residues 909-948 (TLQEVKHELKEDIQLLSCRMTALEKQVAEILKLLSEKSVP).

This sequence belongs to the potassium channel family. H (Eag) (TC 1.A.1.20) subfamily. Kv10.2/KCNH5 sub-subfamily. In terms of assembly, homotetramer. The potassium channel is probably composed of a homo- or heterotetrameric complex of pore-forming alpha subunits that can associate with modulating beta subunits. Heteromultimer with KCNH1/EAG. As to expression, detected in adult testis and in embryonic and adult brain, but not in other tissues. Highly expressed in specific brain areas, such as neocortex, olfactory bulb, primary olfactory cortex and brain stem. In cortex, expression is concentrated in a narrow band toward the middle lamella (layer IV). Moderately expressed in spinal cord, dorsal thalamic nuclei, medial hypothalamus, colliculus, lateral lemniscus, pontine nuclei and Islands of Calleja.

It is found in the membrane. It carries out the reaction K(+)(in) = K(+)(out). Inhibited by low nanomolar concentrations of cytosolic calcium. Functionally, pore-forming (alpha) subunit of a voltage-gated delayed rectifier potassium channel that mediates outward-rectifying potassium currents which, on depolarization, reaches a steady-state level and do not inactivate. The kinetic is characterized by a slow activation time course and a small voltage dependence of the activation time constants, therefore, starts to open at more negative voltages. The activation kinetics depend on the prepulse potential and external divalent cation concentration. The time course of activation is biphasic with a fast and a slowly activating current component. With negative prepulses, the current activation is delayed and slowed down several fold, whereas more positive prepulses speed up activation, therefore the activation rate depends on holding potential. This chain is Voltage-gated delayed rectifier potassium channel KCNH5, found in Rattus norvegicus (Rat).